The sequence spans 277 residues: Sulfur carrier protein FdhD (277 aa).

Residue C121 is the Cysteine persulfide intermediate of the active site. Residue 260–265 (FCKPGR) participates in Mo-bis(molybdopterin guanine dinucleotide) binding.

It belongs to the FdhD family.

It localises to the cytoplasm. Required for formate dehydrogenase (FDH) activity. Acts as a sulfur carrier protein that transfers sulfur from IscS to the molybdenum cofactor prior to its insertion into FDH. This chain is Sulfur carrier protein FdhD, found in Escherichia coli O8 (strain IAI1).